The sequence spans 805 residues: 1,4-alpha-glucan-branching enzyme 2-2, chloroplastic/amyloplastic (805 aa).

A chloroplast-targeting transit peptide spans 1–32 (MVVIHGVSLTPRFTLPSRPLNTGFNAGNSTLS). Catalysis depends on aspartate 451, which acts as the Nucleophile. Catalysis depends on glutamate 506, which acts as the Proton donor.

The protein belongs to the glycosyl hydrolase 13 family. GlgB subfamily. In terms of assembly, monomer. As to expression, expressed in seedlings, roots, stems, leaves, inflorescences, seeds and flowers.

The protein resides in the plastid. It localises to the chloroplast stroma. The protein localises to the amyloplast. It carries out the reaction Transfers a segment of a (1-&gt;4)-alpha-D-glucan chain to a primary hydroxy group in a similar glucan chain.. It functions in the pathway glycan biosynthesis; starch biosynthesis. Catalyzes the formation of the alpha-1,6-glucosidic linkages in starch by scission of a 1,4-alpha-linked oligosaccharide from growing alpha-1,4-glucan chains and the subsequent attachment of the oligosaccharide to the alpha-1,6 position. In Arabidopsis thaliana (Mouse-ear cress), this protein is 1,4-alpha-glucan-branching enzyme 2-2, chloroplastic/amyloplastic (SBE2.2).